The chain runs to 433 residues: 3-phosphoshikimate 1-carboxyvinyltransferase (433 aa).

Positions 23, 24, and 28 each coordinate 3-phosphoshikimate. K23 is a binding site for phosphoenolpyruvate. Residues G93 and R121 each coordinate phosphoenolpyruvate. Residues S167, Q169, D318, and K345 each contribute to the 3-phosphoshikimate site. Q169 provides a ligand contact to phosphoenolpyruvate. The active-site Proton acceptor is the D318. Phosphoenolpyruvate contacts are provided by R349 and R390.

This sequence belongs to the EPSP synthase family. Monomer.

It is found in the cytoplasm. It carries out the reaction 3-phosphoshikimate + phosphoenolpyruvate = 5-O-(1-carboxyvinyl)-3-phosphoshikimate + phosphate. It participates in metabolic intermediate biosynthesis; chorismate biosynthesis; chorismate from D-erythrose 4-phosphate and phosphoenolpyruvate: step 6/7. Its function is as follows. Catalyzes the transfer of the enolpyruvyl moiety of phosphoenolpyruvate (PEP) to the 5-hydroxyl of shikimate-3-phosphate (S3P) to produce enolpyruvyl shikimate-3-phosphate and inorganic phosphate. The chain is 3-phosphoshikimate 1-carboxyvinyltransferase from Nitratiruptor sp. (strain SB155-2).